The following is a 163-amino-acid chain: Phosphopantetheine adenylyltransferase (163 aa).

Residues Ser-10 and His-18 each contribute to the ATP site. Ser-10 provides a ligand contact to substrate. Positions 42, 75, and 89 each coordinate substrate. ATP is bound by residues 90–92 (GIR), Glu-100, and 125–131 (YAHVSSS).

The protein belongs to the bacterial CoaD family. In terms of assembly, homohexamer. Mg(2+) serves as cofactor.

It localises to the cytoplasm. The enzyme catalyses (R)-4'-phosphopantetheine + ATP + H(+) = 3'-dephospho-CoA + diphosphate. It functions in the pathway cofactor biosynthesis; coenzyme A biosynthesis; CoA from (R)-pantothenate: step 4/5. In terms of biological role, reversibly transfers an adenylyl group from ATP to 4'-phosphopantetheine, yielding dephospho-CoA (dPCoA) and pyrophosphate. In Enterococcus faecalis (strain ATCC 700802 / V583), this protein is Phosphopantetheine adenylyltransferase.